The following is a 322-amino-acid chain: Phosphatidylserine decarboxylase proenzyme (322 aa).

Residues aspartate 90, histidine 147, and serine 254 each act as charge relay system; for autoendoproteolytic cleavage activity in the active site. The active-site Schiff-base intermediate with substrate; via pyruvic acid; for decarboxylase activity is the serine 254. Pyruvic acid (Ser); by autocatalysis is present on serine 254. Positions 293 to 322 are disordered; sequence PDAEPAPLPAEEIEAEHDASPLVDDKKDQV. Basic and acidic residues predominate over residues 308–322; the sequence is EHDASPLVDDKKDQV.

The protein belongs to the phosphatidylserine decarboxylase family. PSD-B subfamily. Prokaryotic type I sub-subfamily. Heterodimer of a large membrane-associated beta subunit and a small pyruvoyl-containing alpha subunit. Pyruvate serves as cofactor. Post-translationally, is synthesized initially as an inactive proenzyme. Formation of the active enzyme involves a self-maturation process in which the active site pyruvoyl group is generated from an internal serine residue via an autocatalytic post-translational modification. Two non-identical subunits are generated from the proenzyme in this reaction, and the pyruvate is formed at the N-terminus of the alpha chain, which is derived from the carboxyl end of the proenzyme. The autoendoproteolytic cleavage occurs by a canonical serine protease mechanism, in which the side chain hydroxyl group of the serine supplies its oxygen atom to form the C-terminus of the beta chain, while the remainder of the serine residue undergoes an oxidative deamination to produce ammonia and the pyruvoyl prosthetic group on the alpha chain. During this reaction, the Ser that is part of the protease active site of the proenzyme becomes the pyruvoyl prosthetic group, which constitutes an essential element of the active site of the mature decarboxylase.

Its subcellular location is the cell membrane. The catalysed reaction is a 1,2-diacyl-sn-glycero-3-phospho-L-serine + H(+) = a 1,2-diacyl-sn-glycero-3-phosphoethanolamine + CO2. It participates in phospholipid metabolism; phosphatidylethanolamine biosynthesis; phosphatidylethanolamine from CDP-diacylglycerol: step 2/2. Catalyzes the formation of phosphatidylethanolamine (PtdEtn) from phosphatidylserine (PtdSer). This Escherichia coli (strain 55989 / EAEC) protein is Phosphatidylserine decarboxylase proenzyme.